The chain runs to 59 residues: Photosystem II reaction center protein K (59 aa).

Residues 1–22 (MLNIFSLIGLNSALYSSSCFFA) constitute a propeptide that is removed on maturation. A helical transmembrane segment spans residues 30–50 (FLSPIVDFMPVIPLLFFLLAF).

The protein belongs to the PsbK family. As to quaternary structure, PSII is composed of 1 copy each of membrane proteins PsbA, PsbB, PsbC, PsbD, PsbE, PsbF, PsbH, PsbI, PsbJ, PsbK, PsbL, PsbM, PsbT, PsbX, PsbY, PsbZ, Psb30/Ycf12, at least 3 peripheral proteins of the oxygen-evolving complex and a large number of cofactors. It forms dimeric complexes.

The protein resides in the plastid. It localises to the chloroplast thylakoid membrane. Its function is as follows. One of the components of the core complex of photosystem II (PSII). PSII is a light-driven water:plastoquinone oxidoreductase that uses light energy to abstract electrons from H(2)O, generating O(2) and a proton gradient subsequently used for ATP formation. It consists of a core antenna complex that captures photons, and an electron transfer chain that converts photonic excitation into a charge separation. The protein is Photosystem II reaction center protein K of Silene latifolia (White campion).